Consider the following 211-residue polypeptide: Transcriptional regulatory protein RcsA (211 aa).

The 66-residue stretch at 135–200 (SEVHPFTLSQ…VIYHVVRLTD (66 aa)) folds into the HTH luxR-type domain. Residues 159 to 178 (TIQISDKMQIKAKTVSSHKG) constitute a DNA-binding region (H-T-H motif).

It belongs to the RcsA family.

Component of the Rcs signaling system, which controls transcription of numerous genes. Binds to DNA to regulate expression of genes. This chain is Transcriptional regulatory protein RcsA, found in Erwinia amylovora (Fire blight bacteria).